A 247-amino-acid chain; its full sequence is MPLLFHPAWPLLLGATLTFRALRRVLCRLPQPAHVQTDPLRTWRWHNLLVSFTHSIVSGIWALLCLWQTPEMLVEIETAWSASGYLLVCFSAGYFIHDTVDIVVSKQTRASWEYLVHHVMAMGAFFSGIFWKRFVGGGVLTLLVEVSNIFLTLRMMMKINNAQDLLLYKVNKYINLVMYFLFRLAPQAYLTKFFLQYAGQRTLGTFLLAILLMLDLMIIIYFSRLLRSDFCPERAPRRQQKDKFLTE.

Residues 1-27 (MPLLFHPAWPLLLGATLTFRALRRVLC) form the signal peptide. Over 28-46 (RLPQPAHVQTDPLRTWRWH) the chain is Extracellular. One can recognise a TLC domain in the interval 40-234 (LRTWRWHNLL…LLRSDFCPER (195 aa)). The helical transmembrane segment at 47–67 (NLLVSFTHSIVSGIWALLCLW) threads the bilayer. Residues 68–83 (QTPEMLVEIETAWSAS) are Cytoplasmic-facing. The helical transmembrane segment at 84-104 (GYLLVCFSAGYFIHDTVDIVV) threads the bilayer. At 105–123 (SKQTRASWEYLVHHVMAMG) the chain is on the extracellular side. Residues 124–144 (AFFSGIFWKRFVGGGVLTLLV) constitute an intramembrane region (helical). Over 145–173 (EVSNIFLTLRMMMKINNAQDLLLYKVNKY) the chain is Extracellular. A helical transmembrane segment spans residues 174–194 (INLVMYFLFRLAPQAYLTKFF). Over 195 to 201 (LQYAGQR) the chain is Cytoplasmic. A helical membrane pass occupies residues 202 to 222 (TLGTFLLAILLMLDLMIIIYF). Topologically, residues 223–247 (SRLLRSDFCPERAPRRQQKDKFLTE) are extracellular.

The protein localises to the cell membrane. Its function is as follows. Regulates the composition and fluidity of the plasma membrane. Inhibits the incorporation of membrane-fluidizing phospholipids containing omega-3 long-chain polyunsaturated fatty acids (LCPUFA) and thereby promotes membrane rigidity. Does not appear to have any effect on LCPUFA synthesis. This Mus musculus (Mouse) protein is TLC domain-containing protein 1 (Tlcd1).